Here is a 508-residue protein sequence, read N- to C-terminus: Transcription termination factor MTERF4, chloroplastic (508 aa).

The transit peptide at 1–79 directs the protein to the chloroplast; the sequence is MMKSLFLFSA…PSLLDMERGR (79 aa). Low complexity predominate over residues 28 to 49; it reads RLTASASTSASSPPRAGCSRGP. Disordered stretches follow at residues 28–69 and 475–508; these read RLTA…LYAR and FDTN…EFIE. A compositionally biased stretch (acidic residues) spans 484–508; that stretch reads VEDEVEDEDLDEDSDYDSTDDEFIE.

Belongs to the mTERF family.

Its subcellular location is the plastid. It is found in the chloroplast stroma. Transcription termination factor required for processing and steady-state levels of plastid transcripts. Required for splicing of the chloroplastic group II intron. Required for the accumulation of 16S and 23S ribosomes. The protein is Transcription termination factor MTERF4, chloroplastic of Oryza sativa subsp. japonica (Rice).